Reading from the N-terminus, the 139-residue chain is HTH-type transcriptional regulator MntR (139 aa).

Residues 1–63 (MPTPSMEDHI…YEKYRGLTLT (63 aa)) form the HTH dtxR-type domain. Mn(2+)-binding residues include D8, E11, H77, E99, E102, and H103.

Belongs to the DtxR/MntR family. Homodimer.

The protein resides in the cytoplasm. Its activity is regulated as follows. DNA binding is strongly activated by Mn(2+). Its function is as follows. Central regulator of manganese homeostasis. This is HTH-type transcriptional regulator MntR from Lysinibacillus sphaericus (strain C3-41).